A 231-amino-acid polypeptide reads, in one-letter code: Ion-translocating oxidoreductase complex subunit E (231 aa).

The next 6 membrane-spanning stretches (helical) occupy residues 18 to 38 (ALVQLLGLCPLLAVTSTATNA), 39 to 59 (LGLGLATTLVLTLTNLTISTL), 63 to 83 (TPAEIRIPIYVMIIASVVSAV), 86 to 106 (LINAYAFGLYQSLGIFIPLIV), 125 to 145 (ALSALDGFSIGMGATCAMFVL), and 182 to 202 (PFLLAMLPPGAFIGLGLMLAG).

This sequence belongs to the NqrDE/RnfAE family. As to quaternary structure, the complex is composed of six subunits: RsxA, RsxB, RsxC, RsxD, RsxE and RsxG.

The protein localises to the cell inner membrane. Its function is as follows. Part of a membrane-bound complex that couples electron transfer with translocation of ions across the membrane. Required to maintain the reduced state of SoxR. In Shigella boydii serotype 18 (strain CDC 3083-94 / BS512), this protein is Ion-translocating oxidoreductase complex subunit E.